A 456-amino-acid chain; its full sequence is tRNA-2-methylthio-N(6)-dimethylallyladenosine synthase (456 aa).

The region spanning 19–136 (LTFNVQTFGC…LAELIYARHT (118 aa)) is the MTTase N-terminal domain. C28, C63, C97, C173, C177, and C180 together coordinate [4Fe-4S] cluster. One can recognise a Radical SAM core domain in the interval 159–389 (QKYKFKAGVN…LTTIRESSSK (231 aa)). In terms of domain architecture, TRAM spans 392–455 (KDDEGKIAEV…GFYYMGEMME (64 aa)).

It belongs to the methylthiotransferase family. MiaB subfamily. As to quaternary structure, monomer. Requires [4Fe-4S] cluster as cofactor.

It is found in the cytoplasm. It catalyses the reaction N(6)-dimethylallyladenosine(37) in tRNA + (sulfur carrier)-SH + AH2 + 2 S-adenosyl-L-methionine = 2-methylsulfanyl-N(6)-dimethylallyladenosine(37) in tRNA + (sulfur carrier)-H + 5'-deoxyadenosine + L-methionine + A + S-adenosyl-L-homocysteine + 2 H(+). Catalyzes the methylthiolation of N6-(dimethylallyl)adenosine (i(6)A), leading to the formation of 2-methylthio-N6-(dimethylallyl)adenosine (ms(2)i(6)A) at position 37 in tRNAs that read codons beginning with uridine. This Lachnoclostridium phytofermentans (strain ATCC 700394 / DSM 18823 / ISDg) (Clostridium phytofermentans) protein is tRNA-2-methylthio-N(6)-dimethylallyladenosine synthase.